A 790-amino-acid chain; its full sequence is Valine--tRNA ligase (790 aa).

The short motif at 40 to 50 (PTVSGKMHMGH) is the 'HIGH' region element. The 'KMSKS' region motif lies at 521 to 525 (KMSKS). Lys524 serves as a coordination point for ATP.

Belongs to the class-I aminoacyl-tRNA synthetase family. ValS type 2 subfamily.

It is found in the cytoplasm. It carries out the reaction tRNA(Val) + L-valine + ATP = L-valyl-tRNA(Val) + AMP + diphosphate. Functionally, catalyzes the attachment of valine to tRNA(Val). As ValRS can inadvertently accommodate and process structurally similar amino acids such as threonine, to avoid such errors, it has a 'posttransfer' editing activity that hydrolyzes mischarged Thr-tRNA(Val) in a tRNA-dependent manner. This Thermoplasma volcanium (strain ATCC 51530 / DSM 4299 / JCM 9571 / NBRC 15438 / GSS1) protein is Valine--tRNA ligase.